The primary structure comprises 587 residues: Folylpolyglutamate synthase, mitochondrial (587 aa).

A mitochondrion-targeting transit peptide spans M1 to G42. Residue G106 to S109 participates in ATP binding. Mg(2+) contacts are provided by S130, E200, and H228. ATP contacts are provided by R363 and D377. The interval P484 to H508 is disordered. S539 carries the post-translational modification Phosphoserine.

The protein belongs to the folylpolyglutamate synthase family. In terms of assembly, monomer. The cofactor is a monovalent cation.

The protein resides in the mitochondrion inner membrane. The protein localises to the mitochondrion matrix. It is found in the cytoplasm. It catalyses the reaction (6S)-5,6,7,8-tetrahydrofolyl-(gamma-L-Glu)(n) + L-glutamate + ATP = (6S)-5,6,7,8-tetrahydrofolyl-(gamma-L-Glu)(n+1) + ADP + phosphate + H(+). It functions in the pathway cofactor biosynthesis; tetrahydrofolylpolyglutamate biosynthesis. Functionally, catalyzes conversion of folates to polyglutamate derivatives allowing concentration of folate compounds in the cell and the intracellular retention of these cofactors, which are important substrates for most of the folate-dependent enzymes that are involved in one-carbon transfer reactions involved in purine, pyrimidine and amino acid synthesis. This Cricetulus griseus (Chinese hamster) protein is Folylpolyglutamate synthase, mitochondrial (FPGS).